Consider the following 426-residue polypeptide: Tyrosine--tRNA ligase (426 aa).

Position 35 (Tyr35) interacts with L-tyrosine. The short motif at 40 to 49 (PTADSLHIGH) is the 'HIGH' region element. Tyr172 and Gln176 together coordinate L-tyrosine. The 'KMSKS' region motif lies at 232–236 (KLGKS). Lys235 provides a ligand contact to ATP. Residues 357–414 (ENIKDILVNSKLSKSKNNAKSVILSSSIRINNKKQKSIDFMFKKEDKLFNLFTLIKKG) enclose the S4 RNA-binding domain.

Belongs to the class-I aminoacyl-tRNA synthetase family. TyrS type 1 subfamily. Homodimer.

The protein localises to the cytoplasm. The catalysed reaction is tRNA(Tyr) + L-tyrosine + ATP = L-tyrosyl-tRNA(Tyr) + AMP + diphosphate + H(+). Functionally, catalyzes the attachment of tyrosine to tRNA(Tyr) in a two-step reaction: tyrosine is first activated by ATP to form Tyr-AMP and then transferred to the acceptor end of tRNA(Tyr). The protein is Tyrosine--tRNA ligase of Wigglesworthia glossinidia brevipalpis.